A 252-amino-acid polypeptide reads, in one-letter code: 3-dehydroquinate dehydratase (252 aa).

3-dehydroquinate is bound by residues 46–48 (EWR) and Arg-82. His-143 functions as the Proton donor/acceptor in the catalytic mechanism. Lys-170 acts as the Schiff-base intermediate with substrate in catalysis. 3 residues coordinate 3-dehydroquinate: Arg-212, Ser-231, and Gln-235.

This sequence belongs to the type-I 3-dehydroquinase family. Homodimer.

It catalyses the reaction 3-dehydroquinate = 3-dehydroshikimate + H2O. It participates in metabolic intermediate biosynthesis; chorismate biosynthesis; chorismate from D-erythrose 4-phosphate and phosphoenolpyruvate: step 3/7. In terms of biological role, involved in the third step of the chorismate pathway, which leads to the biosynthesis of aromatic amino acids. Catalyzes the cis-dehydration of 3-dehydroquinate (DHQ) and introduces the first double bond of the aromatic ring to yield 3-dehydroshikimate. The chain is 3-dehydroquinate dehydratase from Listeria monocytogenes serotype 4b (strain F2365).